Consider the following 544-residue polypeptide: Putative lipase ATG15 (544 aa).

Residues 1–45 (MVADFDSGWYEGAGDELGQGARNGVLRERLGGNEKAQVVRSRRKA) are Cytoplasmic-facing. Residues 46–66 (VAWNVLMVLGLILYVLYSACF) form a helical; Signal-anchor for type II membrane protein membrane-spanning segment. Residues 67–544 (AQARQWWRTN…NWFGYCTEYA (478 aa)) lie on the Lumenal side of the membrane. N-linked (GlcNAc...) asparagine glycosylation is found at Asn200, Asn229, and Asn234. Catalysis depends on Ser362, which acts as the Charge relay system. Residues 508 to 530 (PMPSSVASKPTPTPTSPGSPSST) form a disordered region.

Belongs to the AB hydrolase superfamily. Lipase family. Binds to both phosphatidylinositol (PI) and phosphatidylinositol 3,5-bisphosphate (PIP2).

The protein localises to the endosome. It is found in the multivesicular body membrane. The protein resides in the prevacuolar compartment membrane. It carries out the reaction a triacylglycerol + H2O = a diacylglycerol + a fatty acid + H(+). Lipase which is essential for lysis of subvacuolar cytoplasm to vacuole targeted bodies and intravacuolar autophagic bodies. Involved in the lysis of intravacuolar multivesicular body (MVB) vesicles. The intravacuolar membrane disintegration by ATG15 is critical to life span extension. This is Putative lipase ATG15 (ATG15) from Eremothecium gossypii (strain ATCC 10895 / CBS 109.51 / FGSC 9923 / NRRL Y-1056) (Yeast).